The primary structure comprises 104 residues: MGDVMIQSVKTESGLVDGHHGSCDSLGCVVGALAKVAKLVVALAALVLNGALCVLSLVALCVGATPVGPLAVLVATTLASFLCVAYVLFIAAKDRGWIASTNKC.

2 consecutive transmembrane segments (helical) span residues 39–59 (LVVA…SLVA) and 70–90 (LAVL…VLFI).

The protein resides in the secreted. It is found in the host vacuole. The protein localises to the host pathogen-containing vacuole. Its subcellular location is the host pathogen-containing vacuole membrane. Functionally, inclusion membrane protein probably involved in early modification events of the chlamydial inclusion. The protein is Inclusion membrane protein F of Chlamydia trachomatis serovar L2 (strain ATCC VR-902B / DSM 19102 / 434/Bu).